The primary structure comprises 93 residues: Cell division protein FtsB (93 aa).

The Cytoplasmic portion of the chain corresponds to 1–3 (MRV). The helical transmembrane segment at 4-21 (TLVVLLALFLALQYRLWF) threads the bilayer. At 22–93 (GKNSLPDYWR…FFRLVPDRNP (72 aa)) the chain is on the periplasmic side. Residues 28-75 (DYWRLQQEVSNQKNTNENLERRNQLIYADIEDLREGEDALEERARNEL) are a coiled coil.

Belongs to the FtsB family. Part of a complex composed of FtsB, FtsL and FtsQ.

The protein localises to the cell inner membrane. Its function is as follows. Essential cell division protein. May link together the upstream cell division proteins, which are predominantly cytoplasmic, with the downstream cell division proteins, which are predominantly periplasmic. The sequence is that of Cell division protein FtsB from Idiomarina loihiensis (strain ATCC BAA-735 / DSM 15497 / L2-TR).